A 414-amino-acid chain; its full sequence is MKIYLVGGAVRDSLLGLPVTEKDWVVVGATPEDLLAQGYQQVGKDFPVFLHPVSHDEYALARTERKSGKGYTGFVCHAAPDVTLEQDLLRRDLTINAIARTEQGDLIDPYHGRRDLENHVLRHVSDAFSEDPLRVLRVARFAARFAHLGFQIAEETMALMQKMAHEGELAYLTPERVWKETEKALGTSSPDVYFQVLRDCGALAVLFPEIDNLYGVPAPAKWHPEIDTGIHTMMTVAMAARLSPEIDVRFATLCHDLGKGLTPPELWPRHHGHGPAGVKLVEALCQRLRVPNPIRDLAKLVAEYHDLIHTVQVLQPKTLLKLFDAIDVWRKPQRLEQLALTSEADARGRAGFEDTPYPQGDYLREAFRVASQVSSAGVVADGFKGIDVRNELTRRRTQALADWKAQQPDASATS.

G8 and R11 together coordinate ATP. Positions 8 and 11 each coordinate CTP. Mg(2+) contacts are provided by E21 and D23. Residues R91, R137, and R140 each contribute to the ATP site. Residues R91, R137, and R140 each contribute to the CTP site. An HD domain is found at 228–329; the sequence is TGIHTMMTVA…LKLFDAIDVW (102 aa).

This sequence belongs to the tRNA nucleotidyltransferase/poly(A) polymerase family. Bacterial CCA-adding enzyme type 1 subfamily. As to quaternary structure, monomer. Can also form homodimers and oligomers. It depends on Mg(2+) as a cofactor. Ni(2+) is required as a cofactor.

The enzyme catalyses a tRNA precursor + 2 CTP + ATP = a tRNA with a 3' CCA end + 3 diphosphate. It catalyses the reaction a tRNA with a 3' CCA end + 2 CTP + ATP = a tRNA with a 3' CCACCA end + 3 diphosphate. Catalyzes the addition and repair of the essential 3'-terminal CCA sequence in tRNAs without using a nucleic acid template. Adds these three nucleotides in the order of C, C, and A to the tRNA nucleotide-73, using CTP and ATP as substrates and producing inorganic pyrophosphate. tRNA 3'-terminal CCA addition is required both for tRNA processing and repair. Also involved in tRNA surveillance by mediating tandem CCA addition to generate a CCACCA at the 3' terminus of unstable tRNAs. While stable tRNAs receive only 3'-terminal CCA, unstable tRNAs are marked with CCACCA and rapidly degraded. This chain is Multifunctional CCA protein, found in Pectobacterium carotovorum subsp. carotovorum (strain PC1).